A 276-amino-acid polypeptide reads, in one-letter code: NADH-cytochrome b5 reductase 2 (276 aa).

One can recognise an FAD-binding FR-type domain in the interval 15 to 127; it reads EAKYPLPLIE…RGPTGRLFYN (113 aa). An N6-acetyllysine modification is found at lysine 17. Tyrosine 18 bears the Phosphotyrosine mark. FAD is bound by residues 107–137 and 146–181; these read ENMK…IKAN and LVHH…RMSL.

This sequence belongs to the flavoprotein pyridine nucleotide cytochrome reductase family. FAD serves as cofactor.

It carries out the reaction 2 Fe(III)-[cytochrome b5] + NADH = 2 Fe(II)-[cytochrome b5] + NAD(+) + H(+). NADH-cytochrome b5 reductases are involved in desaturation and elongation of fatty acids, cholesterol biosynthesis, drug metabolism, and, in erythrocyte, methemoglobin reduction. Responsible for NADH-dependent lucigenin chemiluminescence in spermatozoa by reducing both lucigenin and 2-[4-iodophenyl]-3-[4-nitrophenyl]-5-[2,4-disulfophenyl]-2H tetrazolium monosodium salt (WST-1). This Mus musculus (Mouse) protein is NADH-cytochrome b5 reductase 2 (Cyb5r2).